A 302-amino-acid polypeptide reads, in one-letter code: RNA polymerase sigma factor RpoH (302 aa).

The interval 57–126 is sigma-70 factor domain-2; it reads LVTSHLRLVA…IQEYILRSWS (70 aa). The Interaction with polymerase core subunit RpoC motif lies at 81–84; the sequence is ELIS. The sigma-70 factor domain-4 stretch occupies residues 235–286; it reads AMDKLNDREKHILTERRLSDNPKTLEELSQVYGVSRERVRQIEVRAFDKLQK. A DNA-binding region (H-T-H motif) is located at residues 259–278; the sequence is LEELSQVYGVSRERVRQIEV.

Belongs to the sigma-70 factor family. RpoH subfamily. In terms of assembly, interacts with the RNA polymerase core enzyme.

The protein localises to the cytoplasm. Sigma factors are initiation factors that promote the attachment of RNA polymerase to specific initiation sites and are then released. This sigma factor is involved in regulation of expression of heat shock genes. The sequence is that of RNA polymerase sigma factor RpoH from Zymomonas mobilis subsp. mobilis (strain ATCC 31821 / ZM4 / CP4).